Consider the following 339-residue polypeptide: Glyceraldehyde-3-phosphate dehydrogenase (339 aa).

Residues 12–13, Asp-34, Arg-78, and Thr-120 each bind NAD(+); that span reads RI. D-glyceraldehyde 3-phosphate is bound by residues 149 to 151, Thr-180, 209 to 210, and Arg-232; these read SCT and TG. Cys-150 acts as the Nucleophile in catalysis. Position 319 (Asn-319) interacts with NAD(+).

It belongs to the glyceraldehyde-3-phosphate dehydrogenase family. Homotetramer.

It is found in the cytoplasm. The catalysed reaction is D-glyceraldehyde 3-phosphate + phosphate + NAD(+) = (2R)-3-phospho-glyceroyl phosphate + NADH + H(+). It functions in the pathway carbohydrate degradation; glycolysis; pyruvate from D-glyceraldehyde 3-phosphate: step 1/5. Catalyzes the oxidative phosphorylation of glyceraldehyde 3-phosphate (G3P) to 1,3-bisphosphoglycerate (BPG) using the cofactor NAD. The first reaction step involves the formation of a hemiacetal intermediate between G3P and a cysteine residue, and this hemiacetal intermediate is then oxidized to a thioester, with concomitant reduction of NAD to NADH. The reduced NADH is then exchanged with the second NAD, and the thioester is attacked by a nucleophilic inorganic phosphate to produce BPG. This chain is Glyceraldehyde-3-phosphate dehydrogenase (gapA), found in Haemophilus influenzae (strain ATCC 51907 / DSM 11121 / KW20 / Rd).